We begin with the raw amino-acid sequence, 281 residues long: Type VI secretion system accessory component TagJ (281 aa).

Interacts with TssB1 (via N-terminus). Interacts with ClpV1.

In terms of biological role, component of the H1 type VI (H1-T6SS) secretion system that plays a role in the release of toxins targeting both eukaryotic and prokaryotic species. Forms a stable complex with TssB1. This complex, although not crucial for the H1-T6SS function, may fine-tune the assembly of the system. Plays a role in the interaction between ClpV1 and the TssC1/TssB1 sheath. In Pseudomonas aeruginosa (strain ATCC 15692 / DSM 22644 / CIP 104116 / JCM 14847 / LMG 12228 / 1C / PRS 101 / PAO1), this protein is Type VI secretion system accessory component TagJ.